The sequence spans 441 residues: Interferon-related developmental regulator 2 (441 aa).

Residues 1 to 15 show a composition bias toward basic residues; that stretch reads MPRARKGNALRKGGQ. The disordered stretch occupies residues 1–51; the sequence is MPRARKGNALRKGGQRRGGGARSSTQADSGSSEDEAASEARSTTSDCPSLL.

It belongs to the IFRD family. Associates with ribosomes; promoting ribosome inactivation.

Its function is as follows. Ribosome-binding protein that acts as an inhibitor of mRNA translation by promoting ribosome inactivation. Associates with the P- and E-sites of the ribosome and inserts a C-terminal helix into the mRNA exit channel to preclude translation. The sequence is that of Interferon-related developmental regulator 2 from Mus musculus (Mouse).